Reading from the N-terminus, the 287-residue chain is ATP synthase gamma chain (287 aa).

Belongs to the ATPase gamma chain family. F-type ATPases have 2 components, CF(1) - the catalytic core - and CF(0) - the membrane proton channel. CF(1) has five subunits: alpha(3), beta(3), gamma(1), delta(1), epsilon(1). CF(0) has three main subunits: a, b and c.

It localises to the cell inner membrane. Its function is as follows. Produces ATP from ADP in the presence of a proton gradient across the membrane. The gamma chain is believed to be important in regulating ATPase activity and the flow of protons through the CF(0) complex. In Salmonella paratyphi A (strain ATCC 9150 / SARB42), this protein is ATP synthase gamma chain.